Reading from the N-terminus, the 158-residue chain is MAFDETYNEPESTEVLVKSLDPEHPALLRYAHAGDAGADLITTVDVTLKPFERALVPTGVAIALPAGYVALVHPRSGLAAKQGVTVLNAPGTVDAGYRGEIKVPLINLDPKHTAVFHPGDRIAQLVIQRYVEARFIPAETLPGSDRAERGFGSTGVAS.

Substrate is bound by residues 75 to 77, asparagine 88, 92 to 94, and lysine 102; these read RSG and TVD.

This sequence belongs to the dUTPase family. Requires Mg(2+) as cofactor.

The catalysed reaction is dUTP + H2O = dUMP + diphosphate + H(+). The protein operates within pyrimidine metabolism; dUMP biosynthesis; dUMP from dCTP (dUTP route): step 2/2. This enzyme is involved in nucleotide metabolism: it produces dUMP, the immediate precursor of thymidine nucleotides and it decreases the intracellular concentration of dUTP so that uracil cannot be incorporated into DNA. This is Deoxyuridine 5'-triphosphate nucleotidohydrolase from Bifidobacterium longum subsp. infantis (strain ATCC 15697 / DSM 20088 / JCM 1222 / NCTC 11817 / S12).